We begin with the raw amino-acid sequence, 192 residues long: GTP cyclohydrolase-2 (192 aa).

Residue R50–E54 participates in GTP binding. Zn(2+) contacts are provided by C55, C66, and C68. GTP is bound by residues E92–R94 and T114. The Proton acceptor role is filled by D126. Residue R128 is the Nucleophile of the active site. Residues T149 and K154 each coordinate GTP.

Belongs to the GTP cyclohydrolase II family. Requires Zn(2+) as cofactor.

It catalyses the reaction GTP + 4 H2O = 2,5-diamino-6-hydroxy-4-(5-phosphoribosylamino)-pyrimidine + formate + 2 phosphate + 3 H(+). Its pathway is cofactor biosynthesis; riboflavin biosynthesis; 5-amino-6-(D-ribitylamino)uracil from GTP: step 1/4. Its function is as follows. Catalyzes the conversion of GTP to 2,5-diamino-6-ribosylamino-4(3H)-pyrimidinone 5'-phosphate (DARP), formate and pyrophosphate. The protein is GTP cyclohydrolase-2 of Helicobacter pylori (strain P12).